A 483-amino-acid polypeptide reads, in one-letter code: Scarecrow-like protein 26 (483 aa).

The GRAS domain maps to 95 to 477; the sequence is KTDESKGLRL…RRLVSASFWA (383 aa). Residues 102–165 are leucine repeat I (LRI); the sequence is LRLVHLLVAA…SKLLERDSVL (64 aa). The interval 184 to 251 is VHIID; that stretch reads FELLQNMSPY…PSAQHLRITA (68 aa). The VHIID motif lies at 215-219; that stretch reads IHIVD. The segment at 267-299 is leucine repeat II (LRII); the sequence is ETGRRLTAFADSIGQPFSYQHCKLDTNAFSTSS. Positions 308–400 are PFYRE; the sequence is VVINCMLHLP…RVFIGPWVAN (93 aa). The SAW stretch occupies residues 403–477; that stretch reads TRITANDAEV…RRLVSASFWA (75 aa).

Belongs to the GRAS family. Expressed in seedlings, roots, leaves and flowers.

It localises to the nucleus. Probable transcription factor involved in plant development. This chain is Scarecrow-like protein 26 (SCL26), found in Arabidopsis thaliana (Mouse-ear cress).